The following is a 228-amino-acid chain: Max-interacting protein 1 (228 aa).

Disordered regions lie at residues 29–76 (GYAS…NELE) and 161–228 (IGST…SFTS). Positions 43 to 56 (QHSKPPRRLSRAQK) are enriched in basic residues. Positions 57–70 (HSSGSSNTSTANRS) are enriched in polar residues. The region spanning 67-119 (ANRSTHNELEKNRRAHLRLCLERLKVLIPLGPDCTRHTTLGLLNKAKAHIKKL) is the bHLH domain. Residues 173 to 183 (EREEIEVDVES) are compositionally biased toward acidic residues. Positions 216 to 228 (GYSSASVKLSFTS) are enriched in polar residues.

In terms of assembly, interacts with SMC3. Efficient DNA binding requires dimerization with another bHLH protein. Binds DNA as a heterodimer with MAX. Interacts with RNF17. As to expression, high levels found in the brain, heart and lung while lower levels are seen in the liver, kidney and skeletal muscle.

It localises to the nucleus. Functionally, transcriptional repressor. MXI1 binds with MAX to form a sequence-specific DNA-binding protein complex which recognizes the core sequence 5'-CAC[GA]TG-3'. MXI1 thus antagonizes MYC transcriptional activity by competing for MAX. This Homo sapiens (Human) protein is Max-interacting protein 1 (MXI1).